A 246-amino-acid polypeptide reads, in one-letter code: Uridylate kinase (246 aa).

16–19 (KFSG) lines the ATP pocket. G58 serves as a coordination point for UMP. G59 and R63 together coordinate ATP. UMP is bound by residues D78 and 139–146 (TGNPFFTT). Positions 166, 172, and 175 each coordinate ATP.

This sequence belongs to the UMP kinase family. In terms of assembly, homohexamer.

The protein localises to the cytoplasm. It catalyses the reaction UMP + ATP = UDP + ADP. It functions in the pathway pyrimidine metabolism; CTP biosynthesis via de novo pathway; UDP from UMP (UMPK route): step 1/1. Inhibited by UTP. Its function is as follows. Catalyzes the reversible phosphorylation of UMP to UDP. The polypeptide is Uridylate kinase (Legionella pneumophila (strain Corby)).